The following is a 307-amino-acid chain: Acetaldehyde dehydrogenase 2 (307 aa).

Cysteine 131 (acyl-thioester intermediate) is an active-site residue. NAD(+)-binding positions include 162 to 170 (SVGPGTRKN) and asparagine 273.

It belongs to the acetaldehyde dehydrogenase family.

It carries out the reaction acetaldehyde + NAD(+) + CoA = acetyl-CoA + NADH + H(+). In Comamonas testosteroni (Pseudomonas testosteroni), this protein is Acetaldehyde dehydrogenase 2 (aphF).